The primary structure comprises 607 residues: ATP-dependent RNA helicase-like protein DB10 (607 aa).

Residues 1–10 (MAVVTASSAG) are compositionally biased toward polar residues. 2 disordered regions span residues 1 to 25 (MAVVTASSAGPSYAPEDPTLPKPWK) and 66 to 108 (VFVS…DGTS). Residues 18–52 (PTLPKPWKGLVDGTTGFIYFWNPETNDTQYERPVP) form the WW domain. Residues 89-98 (RGSNNKIARS) are compositionally biased toward polar residues. Positions 99 to 108 (SSDRFHDGTS) are enriched in basic and acidic residues. Positions 145 to 173 (TSFEATGFPSEIVREMHQAGFSAPTPIQA) match the Q motif motif. In terms of domain architecture, Helicase ATP-binding spans 176-350 (WPIALQGRDI…ADLLVNSVQV (175 aa)). Residue 189 to 196 (AKTGSGKT) coordinates ATP. The DEAD box motif lies at 298-301 (DEAD). A Helicase C-terminal domain is found at 379 to 523 (RVEQILRSKE…CVPTELRDMA (145 aa)). Residues 519 to 607 (LRDMASRGGG…WSGKKSRFTD (89 aa)) are disordered. The segment covering 538-548 (SGPGGRGGRGG) has biased composition (gly residues). Over residues 562-574 (GYDRGSRDSDRYG) the composition is skewed to basic and acidic residues.

The protein belongs to the DEAD box helicase family.

The enzyme catalyses ATP + H2O = ADP + phosphate + H(+). The chain is ATP-dependent RNA helicase-like protein DB10 from Nicotiana sylvestris (Wood tobacco).